Here is a 172-residue protein sequence, read N- to C-terminus: Keratin-associated protein 13-3 (172 aa).

5 consecutive repeat copies span residues 46–55 (CQLGSSLYRG), 56–65 (CQETCWRPNS), 66–75 (CQTLCVESSP), 76–85 (CHTSCYYPRT), and 92–101 (CLTMHVGSRG). A 5 X 10 AA approximate repeats region spans residues 46-101 (CQLGSSLYRGCQETCWRPNSCQTLCVESSPCHTSCYYPRTHMLCNSCLTMHVGSRG).

The protein belongs to the PMG family. Interacts with hair keratins.

Functionally, in the hair cortex, hair keratin intermediate filaments are embedded in an interfilamentous matrix, consisting of hair keratin-associated proteins (KRTAP), which are essential for the formation of a rigid and resistant hair shaft through their extensive disulfide bond cross-linking with abundant cysteine residues of hair keratins. The matrix proteins include the high-sulfur and high-glycine-tyrosine keratins. In Homo sapiens (Human), this protein is Keratin-associated protein 13-3 (KRTAP13-3).